The sequence spans 160 residues: MGLLGFGGAAAEAAQVATHHTTVLLDHHAGACEAVARAAEKAAEEVAAIKMRLQVIRDAAREHHLTIAYATGTALPPPDLSSYSPADQQAILNTAIRRASNVCWPTPRPPMRIWPRRFDAPPGTCRASRSMPNSAMRHPQCRRCRRRTATLRRSSGGGIR.

This is an uncharacterized protein from Mycobacterium tuberculosis (strain CDC 1551 / Oshkosh).